Consider the following 273-residue polypeptide: Ribosomal RNA small subunit methyltransferase A (273 aa).

Residues Asn18, Leu20, Gly45, Glu66, Asp91, and Asn113 each contribute to the S-adenosyl-L-methionine site.

It belongs to the class I-like SAM-binding methyltransferase superfamily. rRNA adenine N(6)-methyltransferase family. RsmA subfamily.

Its subcellular location is the cytoplasm. It carries out the reaction adenosine(1518)/adenosine(1519) in 16S rRNA + 4 S-adenosyl-L-methionine = N(6)-dimethyladenosine(1518)/N(6)-dimethyladenosine(1519) in 16S rRNA + 4 S-adenosyl-L-homocysteine + 4 H(+). Specifically dimethylates two adjacent adenosines (A1518 and A1519) in the loop of a conserved hairpin near the 3'-end of 16S rRNA in the 30S particle. May play a critical role in biogenesis of 30S subunits. The protein is Ribosomal RNA small subunit methyltransferase A of Salmonella choleraesuis (strain SC-B67).